Here is a 296-residue protein sequence, read N- to C-terminus: Probable xyloglucan endotransglucosylase/hydrolase 1 (296 aa).

Residues 1–22 (MGIIKGVLFSIVLINLSLVVFC) form the signal peptide. The region spanning 23-221 (GYPRRPVDVP…WANAPFTASY (199 aa)) is the GH16 domain. E107 (nucleophile) is an active-site residue. The active-site Proton donor is E111. E111 contacts xyloglucan. N-linked (GlcNAc...) asparagine glycosylation occurs at N115. Residues 124–126 (QTN), 134–136 (NRE), 200–201 (DW), and G205 contribute to the xyloglucan site. 2 cysteine pairs are disulfide-bonded: C229-C240 and C277-C290. Residue R282 coordinates xyloglucan.

The protein belongs to the glycosyl hydrolase 16 family. XTH group 1 subfamily. Post-translationally, contains at least one intrachain disulfide bond essential for its enzymatic activity.

The protein resides in the secreted. It is found in the cell wall. It localises to the extracellular space. Its subcellular location is the apoplast. It carries out the reaction breaks a beta-(1-&gt;4) bond in the backbone of a xyloglucan and transfers the xyloglucanyl segment on to O-4 of the non-reducing terminal glucose residue of an acceptor, which can be a xyloglucan or an oligosaccharide of xyloglucan.. Catalyzes xyloglucan endohydrolysis (XEH) and/or endotransglycosylation (XET). Cleaves and religates xyloglucan polymers, an essential constituent of the primary cell wall, and thereby participates in cell wall construction of growing tissues. This is Probable xyloglucan endotransglucosylase/hydrolase 1 (XTH1) from Solanum lycopersicum (Tomato).